We begin with the raw amino-acid sequence, 122 residues long: Large ribosomal subunit protein uL14 (122 aa).

Belongs to the universal ribosomal protein uL14 family. As to quaternary structure, part of the 50S ribosomal subunit. Forms a cluster with proteins L3 and L19. In the 70S ribosome, L14 and L19 interact and together make contacts with the 16S rRNA in bridges B5 and B8.

Functionally, binds to 23S rRNA. Forms part of two intersubunit bridges in the 70S ribosome. This Caldicellulosiruptor bescii (strain ATCC BAA-1888 / DSM 6725 / KCTC 15123 / Z-1320) (Anaerocellum thermophilum) protein is Large ribosomal subunit protein uL14.